An 85-amino-acid chain; its full sequence is Large ribosomal subunit protein bL27 (85 aa).

This sequence belongs to the bacterial ribosomal protein bL27 family.

The polypeptide is Large ribosomal subunit protein bL27 (Pseudomonas fluorescens (strain ATCC BAA-477 / NRRL B-23932 / Pf-5)).